Consider the following 348-residue polypeptide: Enkurin domain-containing protein 1 (348 aa).

3 disordered regions span residues 1 to 65 (MCEG…RPGG), 84 to 195 (GGIS…PSAK), and 262 to 282 (AEAR…TRMP). Position 93 is a phosphoserine (S93). Basic and acidic residues predominate over residues 95-127 (KRKDPKDHEKENMRRIREIQRRFREQEHSREQG). Residue S138 is modified to Phosphoserine. The span at 139–148 (PKYDKVESRV) shows a compositional bias: basic and acidic residues. One can recognise an Enkurin domain in the interval 253–345 (ERRDLWRREA…IFSRPKVFVK (93 aa)).

In terms of assembly, interacts with alpha-tubulin. Interacts (via central region) with CCP110 (via N-terminal region); competes with CEP97 for binding to CCP110.

It is found in the cytoplasm. The protein localises to the cytoskeleton. It localises to the microtubule organizing center. The protein resides in the centrosome. Its subcellular location is the centriole. It is found in the cilium basal body. The protein localises to the cell projection. It localises to the cilium. The protein resides in the spindle. Its subcellular location is the spindle pole. It is found in the cilium axoneme. Microtubule-binding protein which regulates microtubule organization and stability. Promotes the stability of astral microtubules and facilitates the proper orientation of the mitotic spindle. This allows the oriented division of basal keratinocytes and contributes to epidermal stratification. Required for the assembly of both primary and motile cilia. Destabilizes the interaction between CCP110 and CEP97 by competing with CEP97 for binding to CCP110 which promotes the removal of CCP110 and CEP97 from the mother centriole and allows the initiation of ciliogenesis. This chain is Enkurin domain-containing protein 1 (ENKD1), found in Bos taurus (Bovine).